Reading from the N-terminus, the 313-residue chain is Dihydroorotate dehydrogenase B (NAD(+)), catalytic subunit (313 aa).

Residues S21 and 45–46 (KA) contribute to the FMN site. Residues K45 and 69-73 (NAIGL) contribute to the substrate site. Residues N99 and N127 each contribute to the FMN site. Substrate is bound at residue N127. Residue C130 is the Nucleophile of the active site. FMN is bound by residues K165 and I191. 192–193 (NT) is a binding site for substrate. FMN-binding positions include G217, 243–244 (GG), and 265–266 (GT).

This sequence belongs to the dihydroorotate dehydrogenase family. Type 1 subfamily. In terms of assembly, heterotetramer of 2 PyrK and 2 PyrD type B subunits. It depends on FMN as a cofactor.

Its subcellular location is the cytoplasm. The catalysed reaction is (S)-dihydroorotate + NAD(+) = orotate + NADH + H(+). The protein operates within pyrimidine metabolism; UMP biosynthesis via de novo pathway; orotate from (S)-dihydroorotate (NAD(+) route): step 1/1. Its function is as follows. Catalyzes the conversion of dihydroorotate to orotate with NAD(+) as electron acceptor. In Geobacillus sp. (strain WCH70), this protein is Dihydroorotate dehydrogenase B (NAD(+)), catalytic subunit (pyrD).